A 487-amino-acid polypeptide reads, in one-letter code: N-succinylglutamate 5-semialdehyde dehydrogenase (487 aa).

NAD(+) is bound at residue 221-226; the sequence is GSSRTG. Residues glutamate 244 and cysteine 278 contribute to the active site.

Belongs to the aldehyde dehydrogenase family. AstD subfamily.

It carries out the reaction N-succinyl-L-glutamate 5-semialdehyde + NAD(+) + H2O = N-succinyl-L-glutamate + NADH + 2 H(+). Its pathway is amino-acid degradation; L-arginine degradation via AST pathway; L-glutamate and succinate from L-arginine: step 4/5. Its function is as follows. Catalyzes the NAD-dependent reduction of succinylglutamate semialdehyde into succinylglutamate. This is N-succinylglutamate 5-semialdehyde dehydrogenase from Pseudomonas putida (strain GB-1).